The sequence spans 697 residues: uncharacterized protein (697 aa).

A DNA-binding region (zn(2)-C6 fungal-type) is located at residues 24-51; it reads CIRCRQKKIKCSGEKPSCQACSNNKVEC. The chain crosses the membrane as a helical span at residues 500 to 520; sequence YIMSPFVGFSILTAATIHMLL.

It localises to the nucleus membrane. This is an uncharacterized protein from Schizosaccharomyces pombe (strain 972 / ATCC 24843) (Fission yeast).